A 241-amino-acid chain; its full sequence is Uridylate kinase (241 aa).

15–18 lines the ATP pocket; it reads KLSG. The interval 23 to 28 is involved in allosteric activation by GTP; the sequence is GAEGFG. Gly-57 serves as a coordination point for UMP. ATP-binding residues include Gly-58 and Arg-62. UMP-binding positions include Asp-77 and 138 to 145; that span reads TGNPFFTT. ATP-binding residues include Thr-165, Tyr-171, and Asp-174.

Belongs to the UMP kinase family. Homohexamer.

It is found in the cytoplasm. It carries out the reaction UMP + ATP = UDP + ADP. The protein operates within pyrimidine metabolism; CTP biosynthesis via de novo pathway; UDP from UMP (UMPK route): step 1/1. Allosterically activated by GTP. Inhibited by UTP. Functionally, catalyzes the reversible phosphorylation of UMP to UDP. The chain is Uridylate kinase from Yersinia pseudotuberculosis serotype O:1b (strain IP 31758).